The chain runs to 205 residues: Ribonuclease HII (205 aa).

One can recognise an RNase H type-2 domain in the interval Val16 to Phe205. Positions 22, 23, and 118 each coordinate a divalent metal cation.

The protein belongs to the RNase HII family. The cofactor is Mn(2+). Mg(2+) serves as cofactor.

It localises to the cytoplasm. The enzyme catalyses Endonucleolytic cleavage to 5'-phosphomonoester.. In terms of biological role, endonuclease that specifically degrades the RNA of RNA-DNA hybrids. This is Ribonuclease HII from Prochlorococcus marinus (strain MIT 9215).